Reading from the N-terminus, the 120-residue chain is Phosphoribosyl-ATP pyrophosphatase (120 aa).

The interval 97–120 is disordered; that stretch reads REGTSGLVEKASRPAKKDSGTADS. Residues 106 to 120 show a composition bias toward basic and acidic residues; that stretch reads KASRPAKKDSGTADS.

Belongs to the PRA-PH family.

It localises to the cytoplasm. The catalysed reaction is 1-(5-phospho-beta-D-ribosyl)-ATP + H2O = 1-(5-phospho-beta-D-ribosyl)-5'-AMP + diphosphate + H(+). It participates in amino-acid biosynthesis; L-histidine biosynthesis; L-histidine from 5-phospho-alpha-D-ribose 1-diphosphate: step 2/9. This Rhodopirellula baltica (strain DSM 10527 / NCIMB 13988 / SH1) protein is Phosphoribosyl-ATP pyrophosphatase.